A 394-amino-acid polypeptide reads, in one-letter code: 12-oxophytodienoate reductase 7 (394 aa).

Residues 35-37 (PMT) and Gln-110 contribute to the FMN site. 189–192 (HGAH) is a binding site for substrate. Tyr-194 serves as the catalytic Proton donor. FMN is bound at residue Arg-241. Residue Arg-286 participates in substrate binding. FMN-binding positions include Gly-324 and 345 to 346 (GR). A Microbody targeting signal motif is present at residues 392–394 (SRM).

It belongs to the NADH:flavin oxidoreductase/NADH oxidase family. Requires FMN as cofactor.

Its subcellular location is the peroxisome. It carries out the reaction (1S,2S)-OPC-8 + NADP(+) = (9S,13S,15Z)-12-oxophyto-10,15-dienoate + NADPH + H(+). It functions in the pathway lipid metabolism; oxylipin biosynthesis. In terms of biological role, involved in the biosynthesis of jasmonate (JA) and perhaps in biosynthesis or metabolism of other oxylipin signaling moleclules. In vitro, reduces cis(+)-12-oxophytodienoic acid (cis(+)-OPDA) and cis(-)-OPDA to cis(+)-OPC-8:0 and cis(-)-OPC-8:0, respectively. May be required for the spatial and temporal regulation of JA levels during dehiscence of anthers, promoting the stomium degeneration program. Involved in carbohydrate transport underlying normal lodicule function during anthesis. This Oryza sativa subsp. japonica (Rice) protein is 12-oxophytodienoate reductase 7.